The following is an 81-amino-acid chain: ATP synthase subunit c (81 aa).

The next 2 helical transmembrane spans lie at 7–27 (LVAIASAILIAFGALGTAIGF) and 55–75 (IAGLLDAVPMIGVGIGLFFIF).

This sequence belongs to the ATPase C chain family. As to quaternary structure, F-type ATPases have 2 components, F(1) - the catalytic core - and F(0) - the membrane proton channel. F(1) has five subunits: alpha(3), beta(3), gamma(1), delta(1), epsilon(1). F(0) has three main subunits: a(1), b(2) and c(10-14). The alpha and beta chains form an alternating ring which encloses part of the gamma chain. F(1) is attached to F(0) by a central stalk formed by the gamma and epsilon chains, while a peripheral stalk is formed by the delta and b chains.

The protein localises to the cell inner membrane. In terms of biological role, f(1)F(0) ATP synthase produces ATP from ADP in the presence of a proton or sodium gradient. F-type ATPases consist of two structural domains, F(1) containing the extramembraneous catalytic core and F(0) containing the membrane proton channel, linked together by a central stalk and a peripheral stalk. During catalysis, ATP synthesis in the catalytic domain of F(1) is coupled via a rotary mechanism of the central stalk subunits to proton translocation. Functionally, key component of the F(0) channel; it plays a direct role in translocation across the membrane. A homomeric c-ring of between 10-14 subunits forms the central stalk rotor element with the F(1) delta and epsilon subunits. This chain is ATP synthase subunit c, found in Acinetobacter baumannii (strain ACICU).